The chain runs to 256 residues: MLAKRIIPCLDVTNGRVVKGVNFVELRDAGDPVEIARRYDEQGADEITFLDITATSDGRDLILHIIEAVASQVFIPLTVGGGVRAVEDVRRLLNAGADKISVNSSAIANPQLVSDATGKYGSQCIVVAIDAKRSSAPGEPPRWEVFTHGGRKATGLDAVEWAKEMAARGAGEILLTSMDRDGTKSGFDLELTRAVSDAVPVPVIASGGVGGLQDLADGIRLGHADAVLAASIFHYGQHTVGEAKAFMAREGIPVRI.

Residues D11 and D130 contribute to the active site.

Belongs to the HisA/HisF family. In terms of assembly, heterodimer of HisH and HisF.

It is found in the cytoplasm. It catalyses the reaction 5-[(5-phospho-1-deoxy-D-ribulos-1-ylimino)methylamino]-1-(5-phospho-beta-D-ribosyl)imidazole-4-carboxamide + L-glutamine = D-erythro-1-(imidazol-4-yl)glycerol 3-phosphate + 5-amino-1-(5-phospho-beta-D-ribosyl)imidazole-4-carboxamide + L-glutamate + H(+). The protein operates within amino-acid biosynthesis; L-histidine biosynthesis; L-histidine from 5-phospho-alpha-D-ribose 1-diphosphate: step 5/9. Its function is as follows. IGPS catalyzes the conversion of PRFAR and glutamine to IGP, AICAR and glutamate. The HisF subunit catalyzes the cyclization activity that produces IGP and AICAR from PRFAR using the ammonia provided by the HisH subunit. The chain is Imidazole glycerol phosphate synthase subunit HisF from Cupriavidus pinatubonensis (strain JMP 134 / LMG 1197) (Cupriavidus necator (strain JMP 134)).